The sequence spans 131 residues: ATP synthase lipid-binding protein, mitochondrial (131 aa).

Residues 1 to 56 (MLSAARLIAPAARSAIFSNAAVVRPLAAVSTQTQLVPAAPAQLSAVRSFQTTSVTK) constitute a mitochondrion transit peptide. The chain crosses the membrane as a helical span at residues 72 to 92 (VGVAGSGAGIGTVFGSLIIGY). K99 carries the post-translational modification N6,N6,N6-trimethyllysine. Residues 107 to 127 (ILGFALSEAMGLFCLMMAFLL) form a helical membrane-spanning segment.

Belongs to the ATPase C chain family. As to quaternary structure, F-type ATPases have 2 components, CF(1) - the catalytic core - and CF(0) - the membrane proton channel. CF(1) has five subunits: alpha(3), beta(3), gamma(1), delta(1), epsilon(1). CF(0) has three main subunits: a, b and c. Trimethylated by ATPSCKMT at Lys-99. Methylation may be required for proper incorporation of the C subunit into the ATP synthase complex and mitochondrial respiration.

It is found in the mitochondrion membrane. Its function is as follows. Mitochondrial membrane ATP synthase (F(1)F(0) ATP synthase or Complex V) produces ATP from ADP in the presence of a proton gradient across the membrane which is generated by electron transport complexes of the respiratory chain. F-type ATPases consist of two structural domains, F(1) - containing the extramembraneous catalytic core and F(0) - containing the membrane proton channel, linked together by a central stalk and a peripheral stalk. During catalysis, ATP synthesis in the catalytic domain of F(1) is coupled via a rotary mechanism of the central stalk subunits to proton translocation. Part of the complex F(0) domain. A homomeric c-ring of probably 10 subunits is part of the complex rotary element. This chain is ATP synthase lipid-binding protein, mitochondrial, found in Manduca sexta (Tobacco hawkmoth).